We begin with the raw amino-acid sequence, 292 residues long: Undecaprenyl-diphosphatase (292 aa).

7 consecutive transmembrane segments (helical) span residues 1 to 21 (MSLV…FLPV), 46 to 66 (FVTI…RADI), 90 to 110 (LGWY…LLEH), 114 to 134 (ALGN…LLAA), 192 to 212 (FLLS…STVP), 225 to 245 (VVGT…LLAW), and 253 to 273 (VFVV…LSGV).

It belongs to the UppP family.

The protein resides in the cell inner membrane. The catalysed reaction is di-trans,octa-cis-undecaprenyl diphosphate + H2O = di-trans,octa-cis-undecaprenyl phosphate + phosphate + H(+). Functionally, catalyzes the dephosphorylation of undecaprenyl diphosphate (UPP). Confers resistance to bacitracin. This is Undecaprenyl-diphosphatase from Anaeromyxobacter dehalogenans (strain 2CP-1 / ATCC BAA-258).